Consider the following 129-residue polypeptide: Small ribosomal subunit protein uS9 (129 aa).

Residues 107–129 (SRVVERKKPGKKKARRSPQFSKR) are disordered. Residues 114-129 (KPGKKKARRSPQFSKR) show a composition bias toward basic residues.

This sequence belongs to the universal ribosomal protein uS9 family.

The sequence is that of Small ribosomal subunit protein uS9 from Sulfurovum sp. (strain NBC37-1).